The primary structure comprises 375 residues: Pulmonary surfactant-associated protein D (375 aa).

Residues 1-20 (MLLFLLSALVLLTQPLGYLE) form the signal peptide. 2 positions are modified to S-nitrosocysteine: C35 and C40. The segment at 45-221 (SGLPGRDGRD…DKGAKGESGL (177 aa)) is disordered. One can recognise a Collagen-like domain in the interval 46-222 (GLPGRDGRDG…KGAKGESGLP (177 aa)). A compositionally biased stretch (basic and acidic residues) spans 50–65 (RDGRDGREGPRGEKGD). Positions 66-86 (PGLPGAAGQAGMPGQAGPVGP) are enriched in low complexity. 4-hydroxyproline is present on P78. Residue K87 is modified to 5-hydroxylysine. A glycan (N-linked (GlcNAc...) asparagine) is linked at N90. Position 96 is a 4-hydroxyproline (P96). K99 is subject to 5-hydroxylysine. The span at 105 to 114 (SGPPGPPGVP) shows a compositional bias: pro residues. Composition is skewed to low complexity over residues 116–132 (PAGR…IGPQ) and 138–150 (KGEA…VGAP). 4-hydroxyproline occurs at positions 171 and 177. Over residues 204-216 (KGDKGIPGDKGAK) the composition is skewed to basic and acidic residues. Residues 223-252 (DVASLRQQVEALQGQVQHLQAAFSQYKKVE) adopt a coiled-coil conformation. In terms of domain architecture, C-type lectin spans 260 to 375 (VGEKIFKTAG…GEKRLVVCEF (116 aa)). 2 cysteine pairs are disulfide-bonded: C281–C373 and C351–C365.

It belongs to the SFTPD family. In terms of assembly, oligomeric complex of 4 set of homotrimers. The N-terminus is blocked. Post-translationally, hydroxylation on proline residues within the sequence motif, GXPG, is most likely to be 4-hydroxy as this fits the requirement for 4-hydroxylation in vertebrates. In terms of processing, S-nitrosylation at Cys-35 and Cys-40 alters the quaternary structure which results in a pro-inflammatory chemoattractive signaling activity with macrophages. Expressed in lung, brain, pancreas and adipose tissue (mainly mature adipocytes).

The protein resides in the secreted. The protein localises to the extracellular space. It is found in the extracellular matrix. Its subcellular location is the surface film. In terms of biological role, contributes to the lung's defense against inhaled microorganisms, organic antigens and toxins. Interacts with compounds such as bacterial lipopolysaccharides, oligosaccharides and fatty acids and modulates leukocyte action in immune response. May participate in the extracellular reorganization or turnover of pulmonary surfactant. Binds strongly maltose residues and to a lesser extent other alpha-glucosyl moieties. This Homo sapiens (Human) protein is Pulmonary surfactant-associated protein D (SFTPD).